A 64-amino-acid chain; its full sequence is VLVASLVMLEAQSSDTIQVPDWGKRLLMNHDSNRVGIPCGESCVWIPCLTAIAGCSCKNKVCYT.

Positions 1–35 (VLVASLVMLEAQSSDTIQVPDWGKRLLMNHDSNRV) are cleaved as a propeptide — removed in mature form. 3 cysteine pairs are disulfide-bonded: cysteine 39–cysteine 55, cysteine 43–cysteine 57, and cysteine 48–cysteine 62.

As to expression, expressed in fruit, pedicel, root and stem but not in leaf (at protein level).

Functionally, probably participates in a plant defense mechanism. Active against E.coli ATTC25922 but not against S.aureus ATCC 12600 or S.epidermidis ATCC 14990. Has cytotoxic and hemolytic activity. The polypeptide is Chassatide C7 (Chassalia chartacea (Chassalia curviflora)).